A 91-amino-acid chain; its full sequence is CRISPR-associated endoribonuclease Cas2 2 (91 aa).

Aspartate 10 is a Mg(2+) binding site.

It belongs to the CRISPR-associated endoribonuclease Cas2 protein family. In terms of assembly, homodimer, forms a heterotetramer with a Cas1 homodimer. Requires Mg(2+) as cofactor.

Functionally, CRISPR (clustered regularly interspaced short palindromic repeat), is an adaptive immune system that provides protection against mobile genetic elements (viruses, transposable elements and conjugative plasmids). CRISPR clusters contain sequences complementary to antecedent mobile elements and target invading nucleic acids. CRISPR clusters are transcribed and processed into CRISPR RNA (crRNA). Functions as a ssRNA-specific endoribonuclease. Involved in the integration of spacer DNA into the CRISPR cassette. In Thermodesulfovibrio yellowstonii (strain ATCC 51303 / DSM 11347 / YP87), this protein is CRISPR-associated endoribonuclease Cas2 2.